We begin with the raw amino-acid sequence, 132 residues long: MAADLAGKWILESSENFDDYMKAVGVGMVMRKMANAATPTQEIKIDGDSWSIKTSTTFKTTDISFTIGQEFDETTGDGRKIKTTCKIDGNAMIQDQKGSPDSILSREVKDGKMHMILKVNDVVCTRIYKRVD.

Positions 126 and 128 each coordinate (9Z)-hexadecenoate.

Belongs to the calycin superfamily. Fatty-acid binding protein (FABP) family. In terms of assembly, interacts with Na(+)/Ca(2+) exchanger NCXSQ1; ReP1-NCXSQ phosphorylation does not affect the interaction. Post-translationally, phosphorylated. Phosphorylation may result in the release of the bound fatty acid. Expressed in the optic nerve (at protein level).

Its subcellular location is the cytoplasm. The protein localises to the membrane. Functionally, binds and may transport fatty acids such as palmitoleate. Also binds poly-phosphoinositides including phosphatidylinositol 4-phosphate (PtdIns(4)P), phosphatidylinositol 4,5-bisphosphate (PtdIns(4,5)P2) and phosphatidylinositol 3,4,5-trisphosphate (PtdIns(3,4,5)P3), and phosphatidic acid. When phosphorylated, stimulates the activity of optic nerve Na(+)/Ca(2+) exchanger. This is Sodium/calcium exchanger regulatory protein 1 from Doryteuthis pealeii (Longfin inshore squid).